The following is a 249-amino-acid chain: 5'-nucleotidase SurE (249 aa).

Positions 8, 9, 39, and 91 each coordinate a divalent metal cation.

It belongs to the SurE nucleotidase family. It depends on a divalent metal cation as a cofactor.

The protein resides in the cytoplasm. It carries out the reaction a ribonucleoside 5'-phosphate + H2O = a ribonucleoside + phosphate. Nucleotidase that shows phosphatase activity on nucleoside 5'-monophosphates. This is 5'-nucleotidase SurE from Pseudomonas fluorescens (strain SBW25).